The chain runs to 246 residues: NAD-dependent protein deacetylase (246 aa).

The Deacetylase sirtuin-type domain maps to 1–246 (MKMKEFLDLL…RRVMEEGGIS (246 aa)). Positions 22, 26, 33, 34, 98, 100, 101, and 116 each coordinate NAD(+). Residue Phe33 coordinates nicotinamide. Nicotinamide contacts are provided by Ile100 and Asp101. His116 acts as the Proton acceptor in catalysis. Zn(2+) is bound by residues Cys124, Cys127, Cys148, and Cys151. Ser189, Ser190, Asn214, Leu215, Gly216, Asp231, and Val232 together coordinate NAD(+).

The protein belongs to the sirtuin family. Class U subfamily. Zn(2+) serves as cofactor.

It localises to the cytoplasm. It carries out the reaction N(6)-acetyl-L-lysyl-[protein] + NAD(+) + H2O = 2''-O-acetyl-ADP-D-ribose + nicotinamide + L-lysyl-[protein]. Its activity is regulated as follows. Non-competitively inhibited by nicotinamide in vitro and in vivo, but not by nicotinic acid. Nicotinamide inhibits the deacetylation activity by reacting with a reaction intermediate. Functionally, NAD-dependent protein deacetylase which modulates the activities of several enzymes which are inactive in their acetylated form. Also has depropionylation activity in vitro. Also able to ADP-ribosylate peptide substrates with Arg or Lys in the +2 position. The role of this function in vivo is not clear. The chain is NAD-dependent protein deacetylase from Thermotoga maritima (strain ATCC 43589 / DSM 3109 / JCM 10099 / NBRC 100826 / MSB8).